Consider the following 201-residue polypeptide: Recombination protein RecR (201 aa).

The segment at 60-75 (CSRCGNVDTVDPCTVC) adopts a C4-type zinc-finger fold. The Toprim domain occupies 83–178 (SVIIVVEDVA…KITRLAHGVP (96 aa)).

It belongs to the RecR family.

Its function is as follows. May play a role in DNA repair. It seems to be involved in an RecBC-independent recombinational process of DNA repair. It may act with RecF and RecO. The polypeptide is Recombination protein RecR (Rhizobium rhizogenes (strain K84 / ATCC BAA-868) (Agrobacterium radiobacter)).